Consider the following 541-residue polypeptide: Arginine--tRNA ligase (541 aa).

The 'HIGH' region motif lies at 119–129; sequence ANPTGPLHIGH.

Belongs to the class-I aminoacyl-tRNA synthetase family. Monomer.

Its subcellular location is the cytoplasm. The catalysed reaction is tRNA(Arg) + L-arginine + ATP = L-arginyl-tRNA(Arg) + AMP + diphosphate. This Helicobacter pylori (strain P12) protein is Arginine--tRNA ligase.